The following is a 457-amino-acid chain: tRNA-2-methylthio-N(6)-dimethylallyladenosine synthase (457 aa).

The region spanning 4-119 (RNFHIITFGC…APDAIERLYA (116 aa)) is the MTTase N-terminal domain. Residues C13, C48, C82, C164, C168, and C171 each coordinate [4Fe-4S] cluster. A Radical SAM core domain is found at 150–385 (NTLALMAYVN…QATQLEHSTS (236 aa)). The 69-residue stretch at 388-456 (KSRVGVETTV…KHSLVAEPLI (69 aa)) folds into the TRAM domain.

It belongs to the methylthiotransferase family. MiaB subfamily. Monomer. [4Fe-4S] cluster is required as a cofactor.

Its subcellular location is the cytoplasm. It catalyses the reaction N(6)-dimethylallyladenosine(37) in tRNA + (sulfur carrier)-SH + AH2 + 2 S-adenosyl-L-methionine = 2-methylsulfanyl-N(6)-dimethylallyladenosine(37) in tRNA + (sulfur carrier)-H + 5'-deoxyadenosine + L-methionine + A + S-adenosyl-L-homocysteine + 2 H(+). Its function is as follows. Catalyzes the methylthiolation of N6-(dimethylallyl)adenosine (i(6)A), leading to the formation of 2-methylthio-N6-(dimethylallyl)adenosine (ms(2)i(6)A) at position 37 in tRNAs that read codons beginning with uridine. The chain is tRNA-2-methylthio-N(6)-dimethylallyladenosine synthase from Lawsonia intracellularis (strain PHE/MN1-00).